The chain runs to 506 residues: Probable cytochrome P450 519E1 (506 aa).

A helical membrane pass occupies residues 1–21 (MGIGLIILYLLIGLLAYDFTK). C453 lines the heme pocket.

This sequence belongs to the cytochrome P450 family. Requires heme as cofactor.

The protein localises to the membrane. This chain is Probable cytochrome P450 519E1 (cyp519E1), found in Dictyostelium discoideum (Social amoeba).